Reading from the N-terminus, the 237-residue chain is MKLLIDAGNSRVKWALYQGEDCVRQGAAEHGELAGLAAVWRDLPLTGAWMSSVARREVADALAAAVPCPLHRVHAERRFGDVRNHYRNTAEQGADRWLAVLAARELCRGDVIVACAGTALTVEALTAEGDYLGGLILPGHGLMLQSLAQGTANLNRPAGEVVDFPQGTQDALASGAIAALAGAIAEQRRRLAERTGRAPATVILTGGDAARIAPWLAAPMQIVDNLVLMGLLKVANT.

6–13 (DAGNSRVK) provides a ligand contact to ATP. Substrate-binding positions include Tyr-86 and 93-96 (GADR). Residue Asp-95 is the Proton acceptor of the active site. Thr-118 provides a ligand contact to ATP. Substrate is bound at residue Thr-168.

This sequence belongs to the type III pantothenate kinase family. In terms of assembly, homodimer. The cofactor is NH4(+). It depends on K(+) as a cofactor.

The protein localises to the cytoplasm. The enzyme catalyses (R)-pantothenate + ATP = (R)-4'-phosphopantothenate + ADP + H(+). It functions in the pathway cofactor biosynthesis; coenzyme A biosynthesis; CoA from (R)-pantothenate: step 1/5. In terms of biological role, catalyzes the phosphorylation of pantothenate (Pan), the first step in CoA biosynthesis. In Chromobacterium violaceum (strain ATCC 12472 / DSM 30191 / JCM 1249 / CCUG 213 / NBRC 12614 / NCIMB 9131 / NCTC 9757 / MK), this protein is Type III pantothenate kinase.